The sequence spans 308 residues: Cell division protein FtsX (308 aa).

At 1–24 (MISRFFRHLFEALKSLKRNGWMTV) the chain is on the extracellular side. Residues 25 to 45 (AAVSSVMITLTLVAIFASVIF) form a helical membrane-spanning segment. Residues 46-178 (NTAKLATDIE…NTERLFKLAS (133 aa)) are Cytoplasmic-facing. The chain crosses the membrane as a helical span at residues 179–199 (FIRVWGLGIAALLIFIAAFLI). The Extracellular segment spans residues 200–236 (SNTIRITIISRSREIQIMRLVGAKNSYIRGPFLLEGA). A helical transmembrane segment spans residues 237 to 257 (FIGLLGAIAPSVLVFIVYQIV). Topologically, residues 258 to 276 (YQSVNKSLVGQNLSMISPD) are cytoplasmic. The chain crosses the membrane as a helical span at residues 277-297 (LFSPLMIALLFVIGVFIGSLG). Residues 298–308 (SGISMRRFLKI) lie on the Extracellular side of the membrane.

Belongs to the ABC-4 integral membrane protein family. FtsX subfamily. In terms of assembly, interacts with FtsE. Interacts (via large extracellular loop) with PcsB (via N-terminal coiled coil domain). This interaction directs PcsB to equatorial and septal sites of dividing cells.

The protein localises to the cell membrane. Part of the ABC transporter FtsEX involved in asymmetric cellular division facilitating the initiation of sporulation. Required in maintaining normal growth and cellular morphology. In Streptococcus pneumoniae (strain ATCC BAA-255 / R6), this protein is Cell division protein FtsX.